We begin with the raw amino-acid sequence, 488 residues long: Cytochrome P450 monooxygenase orf2 (488 aa).

A helical transmembrane segment spans residues 7-27 (LPGIFLPLAGCVLALSLTTIV). Position 432 (Cys432) interacts with heme.

The protein belongs to the cytochrome P450 family. Heme serves as cofactor.

Its subcellular location is the membrane. It participates in secondary metabolite biosynthesis. Cytochrome P450 monooxygenase; part of the gene cluster that mediates the biosynthesis of nigerpyrone and its derivatives carbonarone A and pestalamide A. The biosynthesis pathway begins with the polyketide assembly by epaA to form phenylacetyl triketide precursor from successive condensation of two malonyl-CoA, presumably with one phenylacetyl-CoA starter unit produced by the phenylacetyl-CoA ligase epaB. For the nigerpyrone biosynthesis, the reactive polyketide chain is released as an aldehyde through the R-domain. A nonenzymatic cyclization and dehydration may create nigerpyrone. For the biosynthesis of carbonarone A and pestalamide A, an extra methyl group is added through the C-methyltransferase domain. Several further steps involving the dehydrogenase orf1, the cytochrome P450 monooxygenase orf2 and the FAD-dependent monooxygenase orf3 are required to form a carbonarone A precursor which is converted to carbonarone A via cyclization. The O-acetyltransferase epaC could catalyze the transfer of 2-methylsuccinyl-CoA, a common intermediate in the ethylmalonyl-CoA pathway, to generate the final product pestalamide A. The chain is Cytochrome P450 monooxygenase orf2 from Aspergillus niger (strain ATCC MYA-4892 / CBS 513.88 / FGSC A1513).